The primary structure comprises 395 residues: Flap endonuclease 1 (395 aa).

The segment at 1 to 104 (MGIKHLYQVI…GELAKRFMRK (104 aa)) is N-domain. Residue aspartate 34 coordinates Mg(2+). Residues arginine 47 and arginine 70 each contribute to the DNA site. Aspartate 86, glutamate 158, glutamate 160, aspartate 179, and aspartate 181 together coordinate Mg(2+). Residues 122–253 (DVEKFSRRTV…NTALKLIRDH (132 aa)) form an I-domain region. Glutamate 158 is a binding site for DNA. The DNA site is built by glycine 231 and aspartate 233. Aspartate 233 is a Mg(2+) binding site. The interval 341 to 349 (QQSRLEGFF) is interaction with PCNA. Over residues 357–389 (QEKATLKRKHEEKLELQKKKKKEEAKAKKEAKS) the composition is skewed to basic and acidic residues. Positions 357–395 (QEKATLKRKHEEKLELQKKKKKEEAKAKKEAKSKPRGAV) are disordered.

This sequence belongs to the XPG/RAD2 endonuclease family. FEN1 subfamily. Interacts with PCNA. Three molecules of FEN1 bind to one PCNA trimer with each molecule binding to one PCNA monomer. PCNA stimulates the nuclease activity without altering cleavage specificity. Requires Mg(2+) as cofactor. In terms of processing, phosphorylated. Phosphorylation upon DNA damage induces relocalization to the nuclear plasma.

The protein resides in the nucleus. The protein localises to the nucleolus. It is found in the nucleoplasm. Its subcellular location is the mitochondrion. Functionally, structure-specific nuclease with 5'-flap endonuclease and 5'-3' exonuclease activities involved in DNA replication and repair. During DNA replication, cleaves the 5'-overhanging flap structure that is generated by displacement synthesis when DNA polymerase encounters the 5'-end of a downstream Okazaki fragment. It enters the flap from the 5'-end and then tracks to cleave the flap base, leaving a nick for ligation. Also involved in the long patch base excision repair (LP-BER) pathway, by cleaving within the apurinic/apyrimidinic (AP) site-terminated flap. Acts as a genome stabilization factor that prevents flaps from equilibrating into structures that lead to duplications and deletions. Also possesses 5'-3' exonuclease activity on nicked or gapped double-stranded DNA, and exhibits RNase H activity. Also involved in replication and repair of rDNA and in repairing mitochondrial DNA. The chain is Flap endonuclease 1 from Ajellomyces dermatitidis (strain ER-3 / ATCC MYA-2586) (Blastomyces dermatitidis).